A 316-amino-acid chain; its full sequence is Ribose-phosphate pyrophosphokinase (316 aa).

ATP contacts are provided by residues Asp-41–Glu-43 and Arg-100–Gln-101. His-134 and Asp-175 together coordinate Mg(2+). Lys-198 is an active-site residue. D-ribose 5-phosphate-binding positions include Arg-200, Asp-224, and Asp-228 to Ser-232.

This sequence belongs to the ribose-phosphate pyrophosphokinase family. Class I subfamily. In terms of assembly, homohexamer. Mg(2+) serves as cofactor.

The protein resides in the cytoplasm. It catalyses the reaction D-ribose 5-phosphate + ATP = 5-phospho-alpha-D-ribose 1-diphosphate + AMP + H(+). It functions in the pathway metabolic intermediate biosynthesis; 5-phospho-alpha-D-ribose 1-diphosphate biosynthesis; 5-phospho-alpha-D-ribose 1-diphosphate from D-ribose 5-phosphate (route I): step 1/1. Involved in the biosynthesis of the central metabolite phospho-alpha-D-ribosyl-1-pyrophosphate (PRPP) via the transfer of pyrophosphoryl group from ATP to 1-hydroxyl of ribose-5-phosphate (Rib-5-P). The chain is Ribose-phosphate pyrophosphokinase from Thermosipho africanus (strain TCF52B).